We begin with the raw amino-acid sequence, 462 residues long: MKLYDTFSAAKRVFDPIDSACVKIYACGPTVYDLAHIGNARSAVVYDVLFRLLRELYPEVIYVRNITDVDDKIINAAAETGQNIGDFTERYIRYFHEDMDALNCLSPTVEPRATAEIDTMLQLISRLVESGHAYVKGGSVYFSISSHRHYGRLSGRKIDEMISGNRVSIDAEKLHPGDFVLWKPATEQDIKLGAAWESPWGGGRPGWHIECSAMSYRYLGESFDIHGGGADLMFPHHENELAQNMCAFSGSEYARYWVHNGFLTVNAGEKMSKSLGNVITVRGLRNSGIEGAVIRYVFLCTHYRKPLDWNEKAIFDAQSALSKMRRSCEEFTSEELNSDIEAVGVHNMLLEALKDDMNTPMAIAALHALVGEINKTTDFKERLKLARVLNRSAKLMGITDGFAGKSAEEAVDVDKIQELLERRREARNGGNYSLADEIRDQLHSMGIVIKDDKDGVTRWSRA.

C27 contacts Zn(2+). Positions 29 to 39 (PTVYDLAHIGN) match the 'HIGH' region motif. Zn(2+) is bound by residues C211, H236, and E240. Positions 270-274 (KMSKS) match the 'KMSKS' region motif. K273 contacts ATP.

Belongs to the class-I aminoacyl-tRNA synthetase family. As to quaternary structure, monomer. Zn(2+) is required as a cofactor.

Its subcellular location is the cytoplasm. The enzyme catalyses tRNA(Cys) + L-cysteine + ATP = L-cysteinyl-tRNA(Cys) + AMP + diphosphate. This Anaplasma phagocytophilum (strain HZ) protein is Cysteine--tRNA ligase.